Here is a 369-residue protein sequence, read N- to C-terminus: 4-hydroxy-3-methylbut-2-en-1-yl diphosphate synthase (flavodoxin) (369 aa).

4 residues coordinate [4Fe-4S] cluster: cysteine 270, cysteine 273, cysteine 305, and glutamate 312.

This sequence belongs to the IspG family. Requires [4Fe-4S] cluster as cofactor.

The catalysed reaction is (2E)-4-hydroxy-3-methylbut-2-enyl diphosphate + oxidized [flavodoxin] + H2O + 2 H(+) = 2-C-methyl-D-erythritol 2,4-cyclic diphosphate + reduced [flavodoxin]. It functions in the pathway isoprenoid biosynthesis; isopentenyl diphosphate biosynthesis via DXP pathway; isopentenyl diphosphate from 1-deoxy-D-xylulose 5-phosphate: step 5/6. Converts 2C-methyl-D-erythritol 2,4-cyclodiphosphate (ME-2,4cPP) into 1-hydroxy-2-methyl-2-(E)-butenyl 4-diphosphate. The polypeptide is 4-hydroxy-3-methylbut-2-en-1-yl diphosphate synthase (flavodoxin) (Psychromonas ingrahamii (strain DSM 17664 / CCUG 51855 / 37)).